Here is a 691-residue protein sequence, read N- to C-terminus: Dipeptidyl peptidase 3 (691 aa).

Position 431 (His-431) interacts with Zn(2+). The active site involves Glu-432. His-436 and Glu-492 together coordinate Zn(2+).

This sequence belongs to the peptidase M49 family. Zn(2+) serves as cofactor.

The protein localises to the cytoplasm. The catalysed reaction is Release of an N-terminal dipeptide from a peptide comprising four or more residues, with broad specificity. Also acts on dipeptidyl 2-naphthylamides.. This is Dipeptidyl peptidase 3 (dpp3-1) from Dictyostelium discoideum (Social amoeba).